The primary structure comprises 479 residues: ATP synthase subunit beta, chloroplastic (479 aa).

156 to 163 (GGAGVGKT) contributes to the ATP binding site.

The protein belongs to the ATPase alpha/beta chains family. In terms of assembly, F-type ATPases have 2 components, CF(1) - the catalytic core - and CF(0) - the membrane proton channel. CF(1) has five subunits: alpha(3), beta(3), gamma(1), delta(1), epsilon(1). CF(0) has four main subunits: a(1), b(1), b'(1) and c(9-12).

It localises to the plastid. Its subcellular location is the chloroplast thylakoid membrane. It catalyses the reaction ATP + H2O + 4 H(+)(in) = ADP + phosphate + 5 H(+)(out). In terms of biological role, produces ATP from ADP in the presence of a proton gradient across the membrane. The catalytic sites are hosted primarily by the beta subunits. This Trichomanes davallioides (Kilau fern) protein is ATP synthase subunit beta, chloroplastic.